The chain runs to 356 residues: UDP-N-acetylglucosamine--N-acetylmuramyl-(pentapeptide) pyrophosphoryl-undecaprenol N-acetylglucosamine transferase (356 aa).

UDP-N-acetyl-alpha-D-glucosamine contacts are provided by residues 11–13, asparagine 122, serine 186, and glutamine 287; that span reads TGG.

This sequence belongs to the glycosyltransferase 28 family. MurG subfamily.

It localises to the cell inner membrane. The catalysed reaction is di-trans,octa-cis-undecaprenyl diphospho-N-acetyl-alpha-D-muramoyl-L-alanyl-D-glutamyl-meso-2,6-diaminopimeloyl-D-alanyl-D-alanine + UDP-N-acetyl-alpha-D-glucosamine = di-trans,octa-cis-undecaprenyl diphospho-[N-acetyl-alpha-D-glucosaminyl-(1-&gt;4)]-N-acetyl-alpha-D-muramoyl-L-alanyl-D-glutamyl-meso-2,6-diaminopimeloyl-D-alanyl-D-alanine + UDP + H(+). It participates in cell wall biogenesis; peptidoglycan biosynthesis. Functionally, cell wall formation. Catalyzes the transfer of a GlcNAc subunit on undecaprenyl-pyrophosphoryl-MurNAc-pentapeptide (lipid intermediate I) to form undecaprenyl-pyrophosphoryl-MurNAc-(pentapeptide)GlcNAc (lipid intermediate II). In Anaplasma marginale (strain St. Maries), this protein is UDP-N-acetylglucosamine--N-acetylmuramyl-(pentapeptide) pyrophosphoryl-undecaprenol N-acetylglucosamine transferase.